Consider the following 249-residue polypeptide: Small ribosomal subunit protein uS2 (249 aa).

It belongs to the universal ribosomal protein uS2 family.

The polypeptide is Small ribosomal subunit protein uS2 (Bordetella avium (strain 197N)).